The chain runs to 560 residues: MSNVGKPILAGLIAGLSLLGLAVAQAAAPEMTAEEKEASKQIYFERCAGCHGVLRKGATGKNLEPHWSKTEADGKKTEGGTLNLGTKRLENIIAYGTEGGMVNYDDILTKEEINMMARYIQHTPDIPPEFSLQDMKDSWNLIVPVEKRVTKQMNKINLQNVFAVTLRDAGKLALIDGDTHKIWKVLESGYAVHISRMSASGRYVYTTGRDGLTTIIDLWPEEPMTVATVRFGSDMRSVDVSKFEGYEDKYLIGGTYWPPQYSIVDGLTLEPIKVVSTRGQTVDGEYHPEPRVASIVASHIKPEWVVNVKETGQIILVDYTDLKNLKTTTIESAKFLHDGGWDYSKRYFMVAANASNKVAAVDTKTGKLAALIDTAKIPHPGRGANFVHPQFGPVWSTGHLGDDVVSLISTPSEESKYAKYKEHNWKVVQELKMPGAGNLFVKTHPKSKHFWADAPMNPEREVAESVYVFDMNDLSKAPIQLNVAKDSGLPESKAIRRAVQPEYNKAGDEVWISLWGGKTDQSAIVIYDDKTLKLKRVITDPAVVTPTGKFNVFNTMNDVY.

The signal sequence occupies residues 1–26 (MSNVGKPILAGLIAGLSLLGLAVAQA). Positions 27-29 (AAP) are N-terminal tail. The Cytochrome c domain occupies 30-126 (EMTAEEKEAS…ARYIQHTPDI (97 aa)). Cysteine 47, cysteine 50, and histidine 51 together coordinate heme c. Positions 61–80 (KNLEPHWSKTEADGKKTEGG) are disordered. The span at 63–78 (LEPHWSKTEADGKKTE) shows a compositional bias: basic and acidic residues. 2 residues coordinate heme c: threonine 97 and methionine 101. The D1-heme domain stretch occupies residues 127 to 560 (PPEFSLQDMK…NVFNTMNDVY (434 aa)). Positions 193, 236, 237, 256, 382, and 500 each coordinate heme d1.

In terms of assembly, homodimer in solution. Heme c is required as a cofactor. It depends on heme as a cofactor.

Its subcellular location is the periplasm. It catalyses the reaction nitric oxide + Fe(III)-[cytochrome c] + H2O = Fe(II)-[cytochrome c] + nitrite + 2 H(+). It carries out the reaction A + NH4(+) + H2O = hydroxylamine + AH2 + H(+). This chain is Nitrite reductase (nirS), found in Stutzerimonas stutzeri (Pseudomonas stutzeri).